Here is a 1500-residue protein sequence, read N- to C-terminus: DNA-directed RNA polymerase subunit beta' (1500 aa).

Positions 60, 62, 75, and 78 each coordinate Zn(2+). Residues 180-199 (DLGGMETAQRSTQRQIEEDY) form a disordered region. Positions 626, 628, and 630 each coordinate Mg(2+). Positions 1002, 1075, 1082, and 1085 each coordinate Zn(2+). The tract at residues 1440 to 1500 (EVQQAEKSAE…DSDHPDLSSL (61 aa)) is disordered. Residues 1449-1468 (EPTTTALPTTNGHQAPQSDT) show a composition bias toward polar residues.

The protein belongs to the RNA polymerase beta' chain family. In terms of assembly, the RNAP catalytic core consists of 2 alpha, 1 beta, 1 beta' and 1 omega subunit. When a sigma factor is associated with the core the holoenzyme is formed, which can initiate transcription. The cofactor is Mg(2+). Zn(2+) serves as cofactor.

It carries out the reaction RNA(n) + a ribonucleoside 5'-triphosphate = RNA(n+1) + diphosphate. DNA-dependent RNA polymerase catalyzes the transcription of DNA into RNA using the four ribonucleoside triphosphates as substrates. The polypeptide is DNA-directed RNA polymerase subunit beta' (Chloroflexus aggregans (strain MD-66 / DSM 9485)).